Here is a 130-residue protein sequence, read N- to C-terminus: Protein ApaG (130 aa).

The ApaG domain occupies 3 to 127 (KAETRGISVT…FSLDSPHVRR (125 aa)).

The sequence is that of Protein ApaG from Methylobacterium radiotolerans (strain ATCC 27329 / DSM 1819 / JCM 2831 / NBRC 15690 / NCIMB 10815 / 0-1).